Reading from the N-terminus, the 1470-residue chain is Gag-Pol polyprotein (1470 aa).

Residue Gly-2 is the site of N-myristoyl glycine; by host attachment. The Nuclear export signal signature appears at 16–22 (FEHIRLR). A Nuclear localization signal motif is present at residues 26-32 (KKKYQIK). Residues 117-144 (AVTPPGGQQKNNTGGTATPGGSQNFPAQ) form a disordered region. Positions 122-144 (GGQQKNNTGGTATPGGSQNFPAQ) are enriched in polar residues. 2 consecutive CCHC-type zinc fingers follow at residues 398–415 (PKCYNCGKFGHMQRQCPE) and 419–436 (IKCLKCGKPGHLAKDCRG). The interval 479-504 (KEAPAAVCRERETNEKSEQKPPSEQS) is disordered. Positions 486–504 (CRERETNEKSEQKPPSEQS) are enriched in basic and acidic residues. The region spanning 531 to 602 (VKALLDTGAD…TPINIIGRNF (72 aa)) is the Peptidase A2 domain. The active-site For protease activity; shared with dimeric partner is the Asp-536. Positions 658 to 848 (EGKLSRVGGD…PPFEWMGYKL (191 aa)) constitute a Reverse transcriptase domain. Positions 724, 799, and 800 each coordinate Mg(2+). Residues 841 to 849 (FEWMGYKLW) are RT 'primer grip'. The Tryptophan repeat motif motif lies at 1011–1027 (WEQWWADYWQVSWIPEW). The RNase H type-1 domain occupies 1047–1170 (IPGEDVYYVD…IDKLVSKGVR (124 aa)). Mg(2+) is bound by residues Asp-1056, Glu-1091, Asp-1111, and Asp-1162. The segment at 1176-1217 (GRIEEAQEEHDRYHSNWRNLADTFGLPQIVAKEIVAMCPKCQ) adopts an Integrase-type zinc-finger fold. Zn(2+)-binding residues include His-1185, His-1189, Cys-1213, and Cys-1216. The Integrase catalytic domain occupies 1227–1377 (VDASPGVWQM…TAAERLINMI (151 aa)). Positions 1237 and 1289 each coordinate Mg(2+). A DNA-binding region (integrase-type) is located at residues 1396 to 1443 (FRVYYREGRDPVWKGPARLIWKGEGAVVLKEGEELKVVPRRKAKIIKD). The interval 1451–1470 (GDETHLEGAGGSDHQMAGDS) is disordered.

As to quaternary structure, homotrimer. Interacts with gp41 (via C-terminus). In terms of assembly, homodimer. The active site consists of two apposed aspartic acid residues. Heterodimer of p66 RT and p51 RT (RT p66/p51). Heterodimerization of RT is essential for DNA polymerase activity. Despite the sequence identities, p66 RT and p51 RT have distinct folding. As to quaternary structure, homotetramer; may further associate as a homohexadecamer. The cofactor is Mg(2+). Specific enzymatic cleavages by the viral protease yield mature proteins. The protease is released by autocatalytic cleavage. The polyprotein is cleaved during and after budding, this process is termed maturation. Proteolytic cleavage of p66 RT removes the RNase H domain to yield the p51 RT subunit. In terms of processing, capsid protein p24 is phosphorylated.

It is found in the virion. It localises to the host nucleus. The protein localises to the host cytoplasm. The protein resides in the host cell membrane. The catalysed reaction is Specific for a P1 residue that is hydrophobic, and P1' variable, but often Pro.. It carries out the reaction Endohydrolysis of RNA in RNA/DNA hybrids. Three different cleavage modes: 1. sequence-specific internal cleavage of RNA. Human immunodeficiency virus type 1 and Moloney murine leukemia virus enzymes prefer to cleave the RNA strand one nucleotide away from the RNA-DNA junction. 2. RNA 5'-end directed cleavage 13-19 nucleotides from the RNA end. 3. DNA 3'-end directed cleavage 15-20 nucleotides away from the primer terminus.. It catalyses the reaction 3'-end directed exonucleolytic cleavage of viral RNA-DNA hybrid.. The enzyme catalyses DNA(n) + a 2'-deoxyribonucleoside 5'-triphosphate = DNA(n+1) + diphosphate. Its activity is regulated as follows. The viral protease is inhibited by many synthetic protease inhibitors (PIs), such as amprenavir, atazanavir, indinavir, loprinavir, nelfinavir, ritonavir and saquinavir. RT can be inhibited either by nucleoside RT inhibitors (NRTIs) or by non nucleoside RT inhibitors (NNRTIs). NRTIs act as chain terminators, whereas NNRTIs inhibit DNA polymerization by binding a small hydrophobic pocket near the RT active site and inducing an allosteric change in this region. Classical NRTIs are abacavir, adefovir (PMEA), didanosine (ddI), lamivudine (3TC), stavudine (d4T), tenofovir (PMPA), zalcitabine (ddC), and zidovudine (AZT). Classical NNRTIs are atevirdine (BHAP U-87201E), delavirdine, efavirenz (DMP-266), emivirine (I-EBU), and nevirapine (BI-RG-587). The tritherapies used as a basic effective treatment of AIDS associate two NRTIs and one NNRTI. Use of protease inhibitors in tritherapy regimens permit more ambitious therapeutic strategies. Functionally, gag-Pol polyprotein and Gag polyprotein may regulate their own translation, by the binding genomic RNA in the 5'-UTR. At low concentration, Gag-Pol and Gag would promote translation, whereas at high concentration, the polyproteins encapsidate genomic RNA and then shut off translation. In terms of biological role, matrix protein p17 has two main functions: in infected cell, it targets Gag and Gag-pol polyproteins to the plasma membrane via a multipartite membrane-binding signal, that includes its myristointegration complex. The myristoylation signal and the NLS exert conflicting influences its subcellular localization. The key regulation of these motifs might be phosphorylation of a portion of MA molecules on the C-terminal tyrosine at the time of virus maturation, by virion-associated cellular tyrosine kinase. Implicated in the release from host cell mediated by Vpu. Its function is as follows. Capsid protein p24 forms the conical core that encapsulates the genomic RNA-nucleocapsid complex in the virion. The core is constituted by capsid protein hexamer subunits. The core is disassembled soon after virion entry. Interaction with host PPIA/CYPA protects the virus from restriction by host TRIM5-alpha and from an unknown antiviral activity in host cells. This capsid restriction by TRIM5 is one of the factors which restricts SIV to the simian species. Nucleocapsid protein p7 encapsulates and protects viral dimeric unspliced (genomic) RNA. Binds these RNAs through its zinc fingers. Facilitates rearangement of nucleic acid secondary structure during retrotranscription of genomic RNA. This capability is referred to as nucleic acid chaperone activity. Functionally, the aspartyl protease mediates proteolytic cleavages of Gag and Gag-Pol polyproteins during or shortly after the release of the virion from the plasma membrane. Cleavages take place as an ordered, step-wise cascade to yield mature proteins. This process is called maturation. Displays maximal activity during the budding process just prior to particle release from the cell. Also cleaves Nef and Vif, probably concomitantly with viral structural proteins on maturation of virus particles. Hydrolyzes host EIF4GI and PABP1 in order to shut off the capped cellular mRNA translation. The resulting inhibition of cellular protein synthesis serves to ensure maximal viral gene expression and to evade host immune response. In terms of biological role, reverse transcriptase/ribonuclease H (RT) is a multifunctional enzyme that converts the viral dimeric RNA genome into dsDNA in the cytoplasm, shortly after virus entry into the cell. This enzyme displays a DNA polymerase activity that can copy either DNA or RNA templates, and a ribonuclease H (RNase H) activity that cleaves the RNA strand of RNA-DNA heteroduplexes in a partially processive 3' to 5' endonucleasic mode. Conversion of viral genomic RNA into dsDNA requires many steps. A tRNA binds to the primer-binding site (PBS) situated at the 5'-end of the viral RNA. RT uses the 3' end of the tRNA primer to perform a short round of RNA-dependent minus-strand DNA synthesis. The reading proceeds through the U5 region and ends after the repeated (R) region which is present at both ends of viral RNA. The portion of the RNA-DNA heteroduplex is digested by the RNase H, resulting in a ssDNA product attached to the tRNA primer. This ssDNA/tRNA hybridizes with the identical R region situated at the 3' end of viral RNA. This template exchange, known as minus-strand DNA strong stop transfer, can be either intra- or intermolecular. RT uses the 3' end of this newly synthesized short ssDNA to perform the RNA-dependent minus-strand DNA synthesis of the whole template. RNase H digests the RNA template except for two polypurine tracts (PPTs) situated at the 5'-end and near the center of the genome. It is not clear if both polymerase and RNase H activities are simultaneous. RNase H can probably proceed both in a polymerase-dependent (RNA cut into small fragments by the same RT performing DNA synthesis) and a polymerase-independent mode (cleavage of remaining RNA fragments by free RTs). Secondly, RT performs DNA-directed plus-strand DNA synthesis using the PPTs that have not been removed by RNase H as primers. PPTs and tRNA primers are then removed by RNase H. The 3' and 5' ssDNA PBS regions hybridize to form a circular dsDNA intermediate. Strand displacement synthesis by RT to the PBS and PPT ends produces a blunt ended, linear dsDNA copy of the viral genome that includes long terminal repeats (LTRs) at both ends. Its function is as follows. Integrase catalyzes viral DNA integration into the host chromosome, by performing a series of DNA cutting and joining reactions. This enzyme activity takes place after virion entry into a cell and reverse transcription of the RNA genome in dsDNA. The first step in the integration process is 3' processing. This step requires a complex comprising the viral genome, matrix protein, Vpr and integrase. This complex is called the pre-integration complex (PIC). The integrase protein removes 2 nucleotides from each 3' end of the viral DNA, leaving recessed CA OH's at the 3' ends. In the second step, the PIC enters cell nucleus. This process is mediated through integrase and Vpr proteins, and allows the virus to infect a non dividing cell. This ability to enter the nucleus is specific of lentiviruses, other retroviruses cannot and rely on cell division to access cell chromosomes. In the third step, termed strand transfer, the integrase protein joins the previously processed 3' ends to the 5' ends of strands of target cellular DNA at the site of integration. The 5'-ends are produced by integrase-catalyzed staggered cuts, 5 bp apart. A Y-shaped, gapped, recombination intermediate results, with the 5'-ends of the viral DNA strands and the 3' ends of target DNA strands remaining unjoined, flanking a gap of 5 bp. The last step is viral DNA integration into host chromosome. This involves host DNA repair synthesis in which the 5 bp gaps between the unjoined strands are filled in and then ligated. Since this process occurs at both cuts flanking the SIV genome, a 5 bp duplication of host DNA is produced at the ends of SIV integration. Alternatively, Integrase may catalyze the excision of viral DNA just after strand transfer, this is termed disintegration. In Cercopithecidae (Old World monkeys), this protein is Gag-Pol polyprotein (gag-pol).